The primary structure comprises 2923 residues: Cadherin EGF LAG seven-pass G-type receptor 2 (2923 aa).

The first 31 residues, 1-31, serve as a signal peptide directing secretion; sequence MRSPATGVPLPTPPPPLLLLLLLLLPPPLLG. Residues 32-2380 lie on the Extracellular side of the membrane; sequence DQVGPCRSLG…GEILPLKTLT (2349 aa). A disordered region spans residues 154–198; the sequence is PGLRAGERSPEESLGGRRKRNVNTAPQFQPPSYQATVPENQPAGT. The span at 158-168 shows a compositional bias: basic and acidic residues; the sequence is AGERSPEESLG. Residues 175–196 show a composition bias toward polar residues; sequence VNTAPQFQPPSYQATVPENQPA. 9 Cadherin domains span residues 182-289, 290-399, 400-505, 506-610, 611-712, 713-815, 816-921, 922-1023, and 1028-1146; these read QPPS…DPVF, EQQE…APQF, SEKR…APIF, VSTP…NPTF, TQPE…RPVF, QSSH…APQF, LRDS…PPVF, EQDE…PPVL, and ILFN…SPLL. Residues Asn-486, Asn-557, and Asn-701 are each glycosylated (N-linked (GlcNAc...) asparagine). Asn-1036, Asn-1076, Asn-1182, and Asn-1212 each carry an N-linked (GlcNAc...) asparagine glycan. An EGF-like 1; calcium-binding domain is found at 1228 to 1286; sequence DDNICLREPCENYMRCVSVLRFDSSAPFIASSSVLFRPIHPVGGLRCRCPPGFTGDYCE. Intrachain disulfides connect Cys-1232-Cys-1243, Cys-1237-Cys-1274, Cys-1276-Cys-1285, Cys-1292-Cys-1303, Cys-1297-Cys-1312, Cys-1314-Cys-1323, Cys-1332-Cys-1343, Cys-1337-Cys-1353, and Cys-1355-Cys-1365. Positions 1288-1324 constitute an EGF-like 2; calcium-binding domain; the sequence is EVDLCYSRPCGPHGRCRSREGGYTCLCRDGYTGEHCE. The region spanning 1328 to 1366 is the EGF-like 3; calcium-binding domain; it reads RSGRCTPGVCKNGGTCVNLLVGGFKCDCPSGDFEKPYCQ. Positions 1367 to 1571 constitute a Laminin G-like 1 domain; sequence VTTRSFPAHS…IANNGTVPGC (205 aa). 2 N-linked (GlcNAc...) asparagine glycosylation sites follow: Asn-1501 and Asn-1565. Disulfide bonds link Cys-1545–Cys-1571, Cys-1578–Cys-1589, Cys-1583–Cys-1598, and Cys-1600–Cys-1609. The 37-residue stretch at 1574 to 1610 folds into the EGF-like 4; calcium-binding domain; sequence KKNVCDSNTCHNGGTCVNQWDAFSCECPLGFGGKSCA. The residue at position 1591 (Asn-1591) is a (3R)-3-hydroxyasparagine. A Laminin G-like 2 domain is found at 1614–1791; it reads ANPQHFLGSS…GESINVEQGC (178 aa). Asn-1741 is a glycosylation site (N-linked (GlcNAc...) asparagine). 14 disulfides stabilise this stretch: Cys-1761-Cys-1791, Cys-1797-Cys-1808, Cys-1802-Cys-1817, Cys-1819-Cys-1828, Cys-1832-Cys-1843, Cys-1837-Cys-1855, Cys-1857-Cys-1866, Cys-1887-Cys-1899, Cys-1889-Cys-1906, Cys-1908-Cys-1921, Cys-1924-Cys-1936, Cys-1926-Cys-1943, Cys-1945-Cys-1954, and Cys-1957-Cys-1969. The EGF-like 5; calcium-binding domain occupies 1793-1828; the sequence is LPDPCDSNPCPANSYCSNDWDSYSCSCDPGYYGDNC. Asn-1810 bears the (3R)-3-hydroxyasparagine mark. N-linked (GlcNAc...) asparagine glycosylation occurs at Asn-1827. Residues 1829-1867 enclose the EGF-like 6; calcium-binding domain; sequence TNVCDLNPCEHQSVCTRKPSAPHGYTCECPPNYLGPYCE. The EGF-like 7; calcium-binding domain maps to 1883–1922; sequence TCGPCNCDVSKGFDPDCNKTSGECHCKENHYRPPGSPTCL. Asn-1900 carries N-linked (GlcNAc...) asparagine glycosylation. One can recognise a Laminin EGF-like domain in the interval 1924–1971; sequence CDCYPTGSLSRVCDPEDGQCPCKPGVIGRQCDRCDNPFAEVTTNGCEV. N-linked (GlcNAc...) asparagine glycans are attached at residues Asn-2024, Asn-2043, and Asn-2061. Residues 2199–2369 enclose the GAIN-B domain; the sequence is ETTVILPESV…AVLMDVSRRE (171 aa). The disordered stretch occupies residues 2213–2238; that stretch reads PPVVRPAGPGEAQEPEELARRQRRHP. Disulfide bonds link Cys-2319-Cys-2351 and Cys-2339-Cys-2353. The tract at residues 2319–2369 is GPS; it reads CVFWNHSILVSGTGGWSARGCEVVFRNESHVSCQCNHMTSFAVLMDVSRRE. Asn-2323 and Asn-2345 each carry an N-linked (GlcNAc...) asparagine glycan. A helical transmembrane segment spans residues 2381–2401; that stretch reads YVALGVTLAALLLTFFFLTLL. Residues 2402 to 2416 lie on the Cytoplasmic side of the membrane; that stretch reads RILRSNQHGIRRNLT. A helical transmembrane segment spans residues 2417–2437; sequence AALGLAQLVFLLGINQADLPF. A topological domain (extracellular) is located at residue Ala-2438. A helical transmembrane segment spans residues 2439-2459; sequence CTVIAILLHFLYLCTFSWALL. The Cytoplasmic segment spans residues 2460-2480; it reads EALHLYRALTEVRDVNTGPMR. Residues 2481–2501 traverse the membrane as a helical segment; the sequence is FYYMLGWGVPAFITGLAVGLD. The Extracellular portion of the chain corresponds to 2502 to 2519; the sequence is PEGYGNPDFCWLSIYDTL. A helical membrane pass occupies residues 2520 to 2540; the sequence is IWSFAGPVAFAVSMSVFLYIL. Residues 2541 to 2560 are Cytoplasmic-facing; that stretch reads AARASCAAQRQGFEKKGPVS. A helical transmembrane segment spans residues 2561 to 2581; the sequence is GLQPSFAVLLLLSATWLLALL. Residues 2582 to 2591 lie on the Extracellular side of the membrane; the sequence is SVNSDTLLFH. A helical membrane pass occupies residues 2592–2612; the sequence is YLFATCNCIQGPFIFLSYVVL. The Cytoplasmic segment spans residues 2613–2923; the sequence is SKEVRKALKL…SEFLFFNFLH (311 aa). 2 disordered regions span residues 2688–2838 and 2854–2888; these read SALN…HKGI and LRLP…RQSL. Acidic residues-rich tracts occupy residues 2718-2730 and 2742-2753; these read TDSD…EDDQ and SEEEEEEEEEEA. Over residues 2807 to 2819 the composition is skewed to basic and acidic residues; the sequence is PEERLRENGDALS. A compositionally biased stretch (low complexity) spans 2863 to 2873; sequence GSSRGSSASEG.

The protein belongs to the G-protein coupled receptor 2 family. LN-TM7 subfamily. Heterodimer of 2 chains generated by proteolytic processing; the large extracellular N-terminal fragment and the membrane-bound C-terminal fragment predominantly remain associated and non-covalently linked. The iron and 2-oxoglutarate dependent 3-hydroxylation of aspartate and asparagine is (R) stereospecific within EGF domains. In terms of processing, autoproteolytically processed at the GPS region of the GAIN-B domain; this cleavage modulates receptor activity. Highest expression in brain and testis.

The protein resides in the cell membrane. Functionally, receptor that may have an important role in cell/cell signaling during nervous system formation. The sequence is that of Cadherin EGF LAG seven-pass G-type receptor 2 from Homo sapiens (Human).